A 357-amino-acid polypeptide reads, in one-letter code: Eugenol O-methyltransferase (357 aa).

S-adenosyl-L-methionine-binding residues include Gly-203, Asp-226, Asp-246, Met-247, and Lys-260. His-264 functions as the Proton acceptor in the catalytic mechanism.

This sequence belongs to the class I-like SAM-binding methyltransferase superfamily. Cation-independent O-methyltransferase family. COMT subfamily. Specifically expressed in the peltate glandular trichomes on the surface of the young basil leaves.

It carries out the reaction (E)-isoeugenol + S-adenosyl-L-methionine = (E)-isomethyleugenol + S-adenosyl-L-homocysteine + H(+). It participates in aromatic compound metabolism; phenylpropanoid biosynthesis. In terms of biological role, phenylpropene O-methyltransferase that catalyzes the methylation of the para-4-hydroxyl of eugenol to methyleugenol. Can also convert chavicol to methylchavicol but with less affinity. The polypeptide is Eugenol O-methyltransferase (EOMT1) (Ocimum basilicum (Sweet basil)).